We begin with the raw amino-acid sequence, 150 residues long: MTKVKKEKAGEEETGGTEKSYQELIANINPIANPLASRKLSKKLYKCVKKAAKVKQIRRGVKEVQKFINKGETGIVVFAGDTLPIDVYCHLPIMCEDRSLPYAYVPSKVDLGSSAGSKRPTCVIMIKPHDEYKEAYDECVEEVTSLPKPI.

It belongs to the eukaryotic ribosomal protein eL8 family. As to quaternary structure, component of the small nucleolar ribonucleoprotein particle containing H/ACA-type snoRNAs (H/ACA snoRNPs). Component of the telomerase holoenzyme complex.

Its subcellular location is the nucleus. It is found in the nucleolus. Functionally, required for ribosome biogenesis. Part of a complex which catalyzes pseudouridylation of rRNA. This involves the isomerization of uridine such that the ribose is subsequently attached to C5, instead of the normal N1. Pseudouridine ('psi') residues may serve to stabilize the conformation of rRNAs. This chain is H/ACA ribonucleoprotein complex subunit 2-like protein (nhp2), found in Danio rerio (Zebrafish).